A 77-amino-acid polypeptide reads, in one-letter code: DNA-directed RNA polymerase subunit omega (77 aa).

This sequence belongs to the RNA polymerase subunit omega family. In terms of assembly, in cyanobacteria the RNAP catalytic core is composed of 2 alpha, 1 beta, 1 beta', 1 gamma and 1 omega subunit. When a sigma factor is associated with the core the holoenzyme is formed, which can initiate transcription.

The catalysed reaction is RNA(n) + a ribonucleoside 5'-triphosphate = RNA(n+1) + diphosphate. Promotes RNA polymerase assembly. Latches the N- and C-terminal regions of the beta' subunit thereby facilitating its interaction with the beta and alpha subunits. In Thermosynechococcus vestitus (strain NIES-2133 / IAM M-273 / BP-1), this protein is DNA-directed RNA polymerase subunit omega.